The chain runs to 559 residues: Glucose-6-phosphate isomerase (559 aa).

Catalysis depends on glutamate 363, which acts as the Proton donor. Residues histidine 394 and lysine 523 contribute to the active site.

Belongs to the GPI family.

The protein localises to the cytoplasm. It carries out the reaction alpha-D-glucose 6-phosphate = beta-D-fructose 6-phosphate. It functions in the pathway carbohydrate biosynthesis; gluconeogenesis. Its pathway is carbohydrate degradation; glycolysis; D-glyceraldehyde 3-phosphate and glycerone phosphate from D-glucose: step 2/4. In terms of biological role, catalyzes the reversible isomerization of glucose-6-phosphate to fructose-6-phosphate. The sequence is that of Glucose-6-phosphate isomerase from Bartonella henselae (strain ATCC 49882 / DSM 28221 / CCUG 30454 / Houston 1) (Rochalimaea henselae).